The following is a 133-amino-acid chain: Small ribosomal subunit protein uS8 (133 aa).

This sequence belongs to the universal ribosomal protein uS8 family. As to quaternary structure, part of the 30S ribosomal subunit. Contacts proteins S5 and S12.

Its function is as follows. One of the primary rRNA binding proteins, it binds directly to 16S rRNA central domain where it helps coordinate assembly of the platform of the 30S subunit. In Gloeobacter violaceus (strain ATCC 29082 / PCC 7421), this protein is Small ribosomal subunit protein uS8.